We begin with the raw amino-acid sequence, 256 residues long: Complex I assembly factor TIMMDC1, mitochondrial (256 aa).

The segment at 1 to 27 (MAQSDPPKSPDPPLPTSIRNPQTPESG) is disordered. 2 helical membrane-spanning segments follow: residues 111–131 (WGWR…GLTV) and 159–179 (VGLL…GALI).

The protein belongs to the Tim17/Tim22/Tim23 family. In terms of assembly, associates with the intermediate 315 kDa subcomplex of incompletely assembled complex I.

It is found in the mitochondrion membrane. In terms of biological role, chaperone protein involved in the assembly of the mitochondrial NADH:ubiquinone oxidoreductase complex (complex I). Participates in constructing the membrane arm of complex I. The sequence is that of Complex I assembly factor TIMMDC1, mitochondrial (timmdc1) from Xenopus laevis (African clawed frog).